Here is a 158-residue protein sequence, read N- to C-terminus: NAD(P)H-quinone oxidoreductase subunit J, chloroplastic (158 aa).

The protein belongs to the complex I 30 kDa subunit family. In terms of assembly, NDH is composed of at least 16 different subunits, 5 of which are encoded in the nucleus.

The protein localises to the plastid. Its subcellular location is the chloroplast thylakoid membrane. It catalyses the reaction a plastoquinone + NADH + (n+1) H(+)(in) = a plastoquinol + NAD(+) + n H(+)(out). The enzyme catalyses a plastoquinone + NADPH + (n+1) H(+)(in) = a plastoquinol + NADP(+) + n H(+)(out). Functionally, NDH shuttles electrons from NAD(P)H:plastoquinone, via FMN and iron-sulfur (Fe-S) centers, to quinones in the photosynthetic chain and possibly in a chloroplast respiratory chain. The immediate electron acceptor for the enzyme in this species is believed to be plastoquinone. Couples the redox reaction to proton translocation, and thus conserves the redox energy in a proton gradient. This chain is NAD(P)H-quinone oxidoreductase subunit J, chloroplastic, found in Lotus japonicus (Lotus corniculatus var. japonicus).